A 143-amino-acid chain; its full sequence is Large-conductance mechanosensitive channel (143 aa).

2 helical membrane-spanning segments follow: residues 10 to 30 and 89 to 109; these read FAVKGNVMDLAVGVIIGGAFS and GSFITVAINFVILAFIIFLMV.

The protein belongs to the MscL family. In terms of assembly, homopentamer.

It is found in the cell inner membrane. Channel that opens in response to stretch forces in the membrane lipid bilayer. May participate in the regulation of osmotic pressure changes within the cell. This Burkholderia ambifaria (strain ATCC BAA-244 / DSM 16087 / CCUG 44356 / LMG 19182 / AMMD) (Burkholderia cepacia (strain AMMD)) protein is Large-conductance mechanosensitive channel.